The following is a 436-amino-acid chain: Histone acetyltransferase RTT109 (436 aa).

The region spanning 2 to 404 (SLNDFLSSVL…LQSLTGKREH (403 aa)) is the Rtt109-type HAT domain. Acetyl-CoA-binding positions include 88–90 (ADT) and 97–101 (RVSVR). Positions 128–170 (RSYKKISPELISAASTPARTLRILARRLKQSGSTVLKEIESPR) are interaction with VPS75. Residues Phe192, Ala196, 211 to 213 (HIL), and Trp221 each bind acetyl-CoA. Asp288 functions as the Proton donor/acceptor in the catalytic mechanism. Lys290 carries the N6-acetyllysine; by autocatalysis modification. Residues 419-433 (LAITMLKPRKKAKAL) form an interaction with ASF1 region.

This sequence belongs to the RTT109 family. As to quaternary structure, forms a complex composed of two RTT109 subunits and one VPS75 homodimer; each RTT109 subunit interacts predominantly with VPS75 instead of interacting with the other RTT109 subunit. Interacts with VPS75; the interaction is direct. Interacts (via C-terminus) with ASF1; the interaction is direct. Interacts with histone H3/H4 heterodimers via histone H3.

It is found in the nucleus. The enzyme catalyses L-lysyl-[histone] + acetyl-CoA = N(6)-acetyl-L-lysyl-[histone] + CoA + H(+). It carries out the reaction L-lysyl-[protein] + acetyl-CoA = N(6)-acetyl-L-lysyl-[protein] + CoA + H(+). In terms of biological role, histone chaperone-dependent acetylase that modifies 'Lys-9', 'Lys-14', 'Lys-23', 'Lys-27', and 'Lys-56' on histone H3 (H3K9Ac, H3K14Ac and H3K23Ac, H3K27Ac, and H3K56Ac) to promote nucleosome assembly, genomic stability, DNA repair and transcriptional regulation during mitotic S-phase. Its residue selectivity is influenced by the acetylation status of histone H3, and also the presence of histone chaperone ASF1 that shifts selectivity to 'Lys-56' when H3K14Ac is already present. H3K56 acetylation weakens the interaction between the histone core and the surrounding DNA in the nucleosomal particle and drives chromatin disassembly. Autoacetylates. Independently of acetyltransferase activity, stimulates histone deposition by VPS75. Involved in regulation of Ty1 transposition. This Saccharomyces cerevisiae (strain ATCC 204508 / S288c) (Baker's yeast) protein is Histone acetyltransferase RTT109.